A 300-amino-acid polypeptide reads, in one-letter code: Protein FANTASTIC FOUR 4 (300 aa).

The span at 30-56 shows a compositional bias: polar residues; the sequence is PQLSTPLKSHFQNSSIAPQDNPITINA. 3 disordered regions span residues 30 to 104, 142 to 170, and 227 to 264; these read PQLS…SPSS, TMET…LPPP, and TETK…KEEE. Low complexity-rich tracts occupy residues 58–88 and 142–151; these read SLPS…NSSS and TMETRTTSTT. An FAF domain is found at 166–217; that stretch reads SLPPPLTSMIGFDCIEVKSHRENGRLVMMATRPPPRNRCLQDRSNGCVRLAI. The segment covering 233–262 has biased composition (acidic residues); the sequence is KEEEEEETIETVRDNEEEIPEYKEEEEEKE.

The protein belongs to the fantastic four family. In terms of tissue distribution, expressed in the shoot apex and young siliques. Detected in provascular and vascular tissue, but not in the vegetative meristem. In inflorescences, restricted to the base of the flower and to the vasculature of the stem and the pedicels, but absent from young flowers. Detected in the center of the inflorescence meristem.

Its function is as follows. Regulates the size of the shoot meristem by modulating the CLV3-WUS feedback loop. Can repress WUS but is under negative control by CLV3. The chain is Protein FANTASTIC FOUR 4 (FAF4) from Arabidopsis thaliana (Mouse-ear cress).